A 342-amino-acid chain; its full sequence is tRNA N6-adenosine threonylcarbamoyltransferase (342 aa).

Fe cation contacts are provided by His114 and His118. Residues 136–140 (LVSGG), Asp169, Gly182, Asp186, and Asn275 contribute to the substrate site. Asp301 lines the Fe cation pocket.

It belongs to the KAE1 / TsaD family. The cofactor is Fe(2+).

Its subcellular location is the cytoplasm. It carries out the reaction L-threonylcarbamoyladenylate + adenosine(37) in tRNA = N(6)-L-threonylcarbamoyladenosine(37) in tRNA + AMP + H(+). In terms of biological role, required for the formation of a threonylcarbamoyl group on adenosine at position 37 (t(6)A37) in tRNAs that read codons beginning with adenine. Is involved in the transfer of the threonylcarbamoyl moiety of threonylcarbamoyl-AMP (TC-AMP) to the N6 group of A37, together with TsaE and TsaB. TsaD likely plays a direct catalytic role in this reaction. The polypeptide is tRNA N6-adenosine threonylcarbamoyltransferase (Streptococcus pyogenes serotype M2 (strain MGAS10270)).